Here is a 394-residue protein sequence, read N- to C-terminus: MKSGNSEPNLMETHTDETKLQNTQVKRKRRLTALTLLFALSAAAAGSAFFLWWQHEEETEDAYVAGRVVQVTPQKGGTVRKVLHDDTDAVKKGDVLAVLDDDNDVLAYERAKNELVQAVRQNRRQNAATSQAGAQVALRRADLARAQDDLRRRSALAESGAVSAEELAHARTAVSQAQAAVKAALAEESSARAALGGDVSLREQPEVQTAIGRLKDAWLNLRRTQVRAPADGQVAKRSVQVGQQVAAGAPLMAVVPLSDVWVDANFKETQLRHMKIGQPAELVSDLYGKQIVYRGRVAGFSAGTGSAFSLIPAQNATGNWIKVVQRVPVRIVLNREDVDRHPLRIGLSMTVKVDTSAAGAPVSKTPGAALPEMESTDWSEVDRTVDEILGQSAP.

The tract at residues 1–23 (MKSGNSEPNLMETHTDETKLQNT) is disordered. The helical transmembrane segment at 33 to 53 (ALTLLFALSAAAAGSAFFLWW) threads the bilayer. Residues 356–376 (SAAGAPVSKTPGAALPEMEST) form a disordered region.

It belongs to the membrane fusion protein (MFP) (TC 8.A.1) family. As to quaternary structure, probably part of a tripartite efflux system FarAB-MtrE, which is composed of an inner membrane transporter, FarB, a periplasmic membrane fusion protein, FarA, and an outer membrane component, MtrE.

It is found in the cell inner membrane. Mediates resistance to long-chained antibacterial fatty acids (FAs). Function is dependent on the MtrE outer membrane protein. This chain is Fatty acid resistance protein FarA, found in Neisseria gonorrhoeae.